We begin with the raw amino-acid sequence, 179 residues long: Crossover junction endodeoxyribonuclease RuvC (179 aa).

Active-site residues include D12, E72, and D144. Residues D12, E72, and D144 each coordinate Mg(2+).

The protein belongs to the RuvC family. In terms of assembly, homodimer which binds Holliday junction (HJ) DNA. The HJ becomes 2-fold symmetrical on binding to RuvC with unstacked arms; it has a different conformation from HJ DNA in complex with RuvA. In the full resolvosome a probable DNA-RuvA(4)-RuvB(12)-RuvC(2) complex forms which resolves the HJ. The cofactor is Mg(2+).

Its subcellular location is the cytoplasm. The catalysed reaction is Endonucleolytic cleavage at a junction such as a reciprocal single-stranded crossover between two homologous DNA duplexes (Holliday junction).. Functionally, the RuvA-RuvB-RuvC complex processes Holliday junction (HJ) DNA during genetic recombination and DNA repair. Endonuclease that resolves HJ intermediates. Cleaves cruciform DNA by making single-stranded nicks across the HJ at symmetrical positions within the homologous arms, yielding a 5'-phosphate and a 3'-hydroxyl group; requires a central core of homology in the junction. The consensus cleavage sequence is 5'-(A/T)TT(C/G)-3'. Cleavage occurs on the 3'-side of the TT dinucleotide at the point of strand exchange. HJ branch migration catalyzed by RuvA-RuvB allows RuvC to scan DNA until it finds its consensus sequence, where it cleaves and resolves the cruciform DNA. The protein is Crossover junction endodeoxyribonuclease RuvC of Dechloromonas aromatica (strain RCB).